A 207-amino-acid chain; its full sequence is Casparian strip membrane protein 1 (207 aa).

Alanine 2 is modified (N-acetylalanine). Residues 2–44 (AKESTTIDVGEPNTMTKSTSHVVVDEKKKKGFVAAAAGGGYKR) lie on the Cytoplasmic side of the membrane. A helical transmembrane segment spans residues 45–65 (GLAVFDFLLRLAAIGITIGAS). Topologically, residues 66 to 95 (SVMFTAEETLPFFTQFLQFQAGYDDFPTFQ) are extracellular. Residues 96–116 (FFVIAIAIVASYLVLSLPFSI) form a helical membrane-spanning segment. Residues 117-128 (VTIVRPLAVAPR) lie on the Cytoplasmic side of the membrane. Residues 129 to 149 (LILLISDTVVLTLTTAAAAAA) traverse the membrane as a helical segment. Over 150–181 (ASIVYLAHNGNTNTNWLPICQQFGDFCQTAST) the chain is Extracellular. A helical transmembrane segment spans residues 182–202 (AVVAASISVAFFVLLIVISAI). The Cytoplasmic segment spans residues 203-207 (ALKRH).

Belongs to the Casparian strip membrane proteins (CASP) family. Homodimer and heterodimers.

It localises to the cell membrane. In terms of biological role, regulates membrane-cell wall junctions and localized cell wall deposition. Required for establishment of the Casparian strip membrane domain (CSD) and the subsequent formation of Casparian strips, a cell wall modification of the root endodermis that determines an apoplastic barrier between the intraorganismal apoplasm and the extraorganismal apoplasm and prevents lateral diffusion. This chain is Casparian strip membrane protein 1, found in Raphanus raphanistrum (Wild radish).